Consider the following 379-residue polypeptide: Homoserine O-succinyltransferase (379 aa).

Residues 51-360 enclose the AB hydrolase-1 domain; it reads NAVLICHALS…DAPQGHDAFL (310 aa). S157 acts as the Nucleophile in catalysis. R227 serves as a coordination point for substrate. Residues D323 and H356 contribute to the active site. Substrate is bound at residue D357.

This sequence belongs to the AB hydrolase superfamily. MetX family. Homodimer.

The protein resides in the cytoplasm. The catalysed reaction is L-homoserine + succinyl-CoA = O-succinyl-L-homoserine + CoA. The protein operates within amino-acid biosynthesis; L-methionine biosynthesis via de novo pathway; O-succinyl-L-homoserine from L-homoserine: step 1/1. Functionally, transfers a succinyl group from succinyl-CoA to L-homoserine, forming succinyl-L-homoserine. The protein is Homoserine O-succinyltransferase of Pseudomonas fluorescens (strain Pf0-1).